A 335-amino-acid chain; its full sequence is DNA-directed RNA polymerase subunit alpha (335 aa).

The tract at residues 1–233 (MTRTANEFLT…QQIAIFVDLQ (233 aa)) is alpha N-terminal domain (alpha-NTD). The tract at residues 247–335 (VDPILLRPVD…MDDRFAYRSR (89 aa)) is alpha C-terminal domain (alpha-CTD).

Belongs to the RNA polymerase alpha chain family. As to quaternary structure, homodimer. The RNAP catalytic core consists of 2 alpha, 1 beta, 1 beta' and 1 omega subunit. When a sigma factor is associated with the core the holoenzyme is formed, which can initiate transcription.

The enzyme catalyses RNA(n) + a ribonucleoside 5'-triphosphate = RNA(n+1) + diphosphate. In terms of biological role, DNA-dependent RNA polymerase catalyzes the transcription of DNA into RNA using the four ribonucleoside triphosphates as substrates. The sequence is that of DNA-directed RNA polymerase subunit alpha from Acinetobacter baumannii (strain AB307-0294).